We begin with the raw amino-acid sequence, 342 residues long: Ferrochelatase (342 aa).

H188 and E268 together coordinate Fe cation.

It belongs to the ferrochelatase family.

The protein localises to the cytoplasm. The enzyme catalyses heme b + 2 H(+) = protoporphyrin IX + Fe(2+). It participates in porphyrin-containing compound metabolism; protoheme biosynthesis; protoheme from protoporphyrin-IX: step 1/1. In terms of biological role, catalyzes the ferrous insertion into protoporphyrin IX. The polypeptide is Ferrochelatase (Rickettsia typhi (strain ATCC VR-144 / Wilmington)).